The following is a 901-amino-acid chain: Probable inorganic carbon transporter subunit DabA (901 aa).

C424, D426, H606, and C621 together coordinate Zn(2+).

This sequence belongs to the inorganic carbon transporter (TC 9.A.2) DabA family. Forms a complex with DabB. Zn(2+) serves as cofactor.

The protein resides in the cell membrane. In terms of biological role, part of an energy-coupled inorganic carbon pump. This Staphylococcus aureus (strain NCTC 8325 / PS 47) protein is Probable inorganic carbon transporter subunit DabA.